The chain runs to 289 residues: Purine nucleoside phosphorylase (289 aa).

An N-acetylmethionine modification is found at Met1. Phosphate-binding positions include Ser33, His64, and 84-86; that span reads RFH. Tyr88 is a binding site for a purine D-ribonucleoside. Ala116 provides a ligand contact to phosphate. The a purine D-ribonucleoside site is built by Glu201 and Met219. Position 220 (Ser220) interacts with phosphate. The a purine D-ribonucleoside site is built by Asn243 and His257.

It belongs to the PNP/MTAP phosphorylase family. In terms of assembly, homotrimer.

It localises to the cytoplasm. The enzyme catalyses inosine + phosphate = alpha-D-ribose 1-phosphate + hypoxanthine. It catalyses the reaction guanosine + phosphate = alpha-D-ribose 1-phosphate + guanine. It carries out the reaction 2'-deoxyguanosine + phosphate = 2-deoxy-alpha-D-ribose 1-phosphate + guanine. The catalysed reaction is 2'-deoxyinosine + phosphate = 2-deoxy-alpha-D-ribose 1-phosphate + hypoxanthine. Its pathway is purine metabolism; purine nucleoside salvage. In terms of biological role, catalyzes the phosphorolytic breakdown of the N-glycosidic bond in the beta-(deoxy)ribonucleoside molecules, with the formation of the corresponding free purine bases and pentose-1-phosphate. Preferentially acts on 6-oxopurine nucleosides including inosine and guanosine. This is Purine nucleoside phosphorylase (Pnp) from Mus musculus (Mouse).